Reading from the N-terminus, the 243-residue chain is Anti-H(O) lectin 2 (243 aa).

The N-linked (GlcNAc...) asparagine glycan is linked to N115. The Mn(2+) site is built by E127 and D129. Residues D129, N136, and D139 each contribute to the Ca(2+) site. Positions 139 and 144 each coordinate Mn(2+).

Belongs to the leguminous lectin family. Homodimer.

In terms of biological role, lactose- or galactose-binding anti-H(O) lectin. The sequence is that of Anti-H(O) lectin 2 from Cytisophyllum sessilifolium (Sessile-leaved cytisus).